We begin with the raw amino-acid sequence, 122 residues long: Large ribosomal subunit protein bL12 (122 aa).

The protein belongs to the bacterial ribosomal protein bL12 family. In terms of assembly, homodimer. Part of the ribosomal stalk of the 50S ribosomal subunit. Forms a multimeric L10(L12)X complex, where L10 forms an elongated spine to which 2 to 4 L12 dimers bind in a sequential fashion. Binds GTP-bound translation factors.

In terms of biological role, forms part of the ribosomal stalk which helps the ribosome interact with GTP-bound translation factors. Is thus essential for accurate translation. This Pasteurella multocida (strain Pm70) protein is Large ribosomal subunit protein bL12.